The primary structure comprises 514 residues: 2,3-bisphosphoglycerate-independent phosphoglycerate mutase (514 aa).

Mn(2+)-binding residues include Asp-14 and Ser-64. Catalysis depends on Ser-64, which acts as the Phosphoserine intermediate. Substrate is bound by residues His-125, 155-156, Arg-187, Arg-193, 263-266, and Lys-336; these read RD and RADR. The Mn(2+) site is built by Asp-403, His-407, Asp-444, His-445, and His-463.

This sequence belongs to the BPG-independent phosphoglycerate mutase family. As to quaternary structure, monomer. Mn(2+) serves as cofactor.

It catalyses the reaction (2R)-2-phosphoglycerate = (2R)-3-phosphoglycerate. Its pathway is carbohydrate degradation; glycolysis; pyruvate from D-glyceraldehyde 3-phosphate: step 3/5. In terms of biological role, catalyzes the interconversion of 2-phosphoglycerate and 3-phosphoglycerate. The sequence is that of 2,3-bisphosphoglycerate-independent phosphoglycerate mutase from Shewanella halifaxensis (strain HAW-EB4).